The chain runs to 1929 residues: MIQITIDVILEDPTLCVVQLYTQVSSQTVFALLSDGSLAVLYPNDNNALVLASKTSMANQLPVDILRKVITTDEGQVQVPITALACHPFVENLVVVGFKDASFSIWFPTDSDPSYKTELHQEELCLIKWLSHGRILVTCDVSGQVILYKFSTDTYSFESITKTRKSGHVVDIVERTCCTDNIIYSIDQEHSDHPIDVSNYAGVGLCEFIVMWSKGDVAVLTDNGVIRHIGTVNLSAGHALLYKLYYWSCSDTCCAISTSGDMFLFGFKTLAVGAYKDILAKYKIEYKRENGIVQLPATKIAYMAPSDGQLRVLSLLTQEVAYIDLEDHIENFVGVNGGLAVIRDYGILIPLRGKNGYAVVSCHRSTGSCDSNGNEGMHILAASDHYLHANDMRFARVQDSNGPSSGPRIRPGSDEFIVTEQHFLHAENPRCSYANIYMSQIVVGDNSFSQTMITNYSITNRNVVSNKMLPIFHDEGGKPINLPPGFSPETASTPEGVDDATIDSFSAEIISSRGKFVSLLLFSFEPKDMQVAYANNTNSAIMAQDLTGEGLTHMKFLDQKFTDSRNSFISAVLIGARIIKVSVNTNANLLQEHTLEIKHPIKKISILTNPLTSVSSDNLSGFVLAFGDNVFTVFEVAIGKVPHLAGSFKLDERYTYVADCVLYGRYILASQNSRADLESDYLKVEIVKYSITGSKAGSLVLSDDPTHGATVERIARMTLVNQHLFMINNNLSLFYTDCKTFNSVVKITDIGQLMFNTNIYCAYLEEEDLDDIHLSTPDTGSPAVEAEESPQRQTREEKIKDLLLVENTMQINQQLHDRIKQERKEQNVISVYTTLPTLIPLDTICVQSCNATITLDNAHHVLFTVVFKGYNVVTGLPCLLPYVVALSIDTKILGEMISAGLTATPSQPTEKVGSRPTTGSDGGSAVLKSRIFDMAPYTVTNAIPDCFGNIGLELVLSTSLNLLFVGSSMLFALKTGTFTKRALSSKNLSAYLSWLDSKEKGSQRNADLVFQQEKYEDQISLLQSIYISSEQRAKVPLLVQSLAETTISMNDRIKGSWLDFNDKIFLSIQGVFAPYVNSKLETLMQPLSSTMLTLLSPAFVFSERSGKSEKPRTSNFVSINSDRLTIKNLTALGSSKKTGFQQSCTATYALNKFTICSSNGQLAEAYSHVLVSENLHVWRSLATLCIQNGYVDLLKTCTTHLKSPILSLLMRLVTNRKRSDAADTGQDQLKTKLAPQDELLLALLSIALGASAQGLDRLQGKPLLLSGVMNDIGLSIRYLMSDGAHSSLQQTGGLTSLAKKSSILSLANRLIHLNDLESSKICYSEVYKAPVAAQGEIDSLNANPQQLLQQNESVQFLNDEYKKKGVAACLTLAKKGTDPQFLYVAARMIESEAKSRDVKSDIPGKMKDELDQQTLWLEAARLYKRCSAFTHALACALKCEDDELIYNIGTTSQSQRLSLVAATYFSNKYKSGLITISEKGRDNVSEDFCDELQATIEHALVLYKSAGLGAQSLELCIKSNRMKELSNLLADILSEPSKSLDRELDDDVVLQEQSTTTQGTGDVLQGISSDLLLRAGRALLDVSPEDYSLNDYNSFIRTAVIALAKASAYQDALQAILDGKIQISERIADILTPASIEHDEEAVRVTETLGKLLHKAGLYQSAVKKFILAQNHTLAINSLIKQGDPMKVIKFANMARQKQVYIAASNFLQTLDWRSNPTYMKAIISFYEKANSLENIAKFFANCAAEEISEYHDYVKAKQAIIEAMNRQKVAIDYVEQNASSKESEKVATARAAKVASLKKTLQAYEQNGKLIHAFLQLCDFARDTSQAHDSSETLTTNSSKLLTAVRKMENCYVKPGDIMGLLAEFHGVRGEKARIVSIIKDMCNEGIDPENYLAADLYAAHAAEAGLTVVNKALELEDIDLTAEKSDH.

WD repeat units lie at residues 76 to 116 (QVQV…PSYK) and 119 to 158 (LHQEELCLIKWLSHGRILVTCDVSGQVILYKFSTDTYSFE). The disordered stretch occupies residues 774–795 (LSTPDTGSPAVEAEESPQRQTR). 3 LRR repeats span residues 957–980 (STSLNLLFVGSSMLFALKTGTFTK), 1019–1044 (ISLLQSIYISSEQRAKVPLLVQSLAE), and 1510–1532 (AQSLELCIKSNRMKELSNLLADI).

Its subcellular location is the cell projection. The protein resides in the cilium. It is found in the flagellum. It localises to the cytoplasm. The protein localises to the cytoskeleton. Its subcellular location is the flagellum axoneme. The protein resides in the flagellum basal body. Component of the intraflagellar transport complex A (IFT-A) involved in flagellar assembly. This chain is Intraflagellar transport protein 140, found in Giardia intestinalis (strain ATCC 50803 / WB clone C6) (Giardia lamblia).